Reading from the N-terminus, the 216-residue chain is Elongation factor Ts (216 aa).

The tract at residues 80 to 83 (TDFV) is involved in Mg(2+) ion dislocation from EF-Tu.

The protein belongs to the EF-Ts family.

It is found in the cytoplasm. Functionally, associates with the EF-Tu.GDP complex and induces the exchange of GDP to GTP. It remains bound to the aminoacyl-tRNA.EF-Tu.GTP complex up to the GTP hydrolysis stage on the ribosome. The chain is Elongation factor Ts from Alkaliphilus oremlandii (strain OhILAs) (Clostridium oremlandii (strain OhILAs)).